The chain runs to 379 residues: Putative cysteine desulfurase IscS 1 (379 aa).

Residues 71–72 (GT), Asn151, Gln179, and 199–201 (SGH) each bind pyridoxal 5'-phosphate. N6-(pyridoxal phosphate)lysine is present on Lys202. Position 237 (Thr237) interacts with pyridoxal 5'-phosphate. The Cysteine persulfide intermediate role is filled by Cys325. Position 325 (Cys325) interacts with [2Fe-2S] cluster.

It belongs to the class-V pyridoxal-phosphate-dependent aminotransferase family. NifS/IscS subfamily. It depends on pyridoxal 5'-phosphate as a cofactor.

The enzyme catalyses (sulfur carrier)-H + L-cysteine = (sulfur carrier)-SH + L-alanine. Its function is as follows. Catalyzes the removal of elemental sulfur from cysteine to produce alanine. This is Putative cysteine desulfurase IscS 1 (iscS1) from Bacillus subtilis (strain 168).